The primary structure comprises 938 residues: Isoleucine--tRNA ligase (938 aa).

The short motif at 58–68 is the 'HIGH' region element; sequence PYANGSIHIGH. The residue at position 183 (lysine 183) is an N6-acetyllysine. Residue glutamate 561 coordinates L-isoleucyl-5'-AMP. Positions 602 to 606 match the 'KMSKS' region motif; sequence KMSKS. ATP is bound at residue lysine 605. Cysteine 901, cysteine 904, cysteine 921, and cysteine 924 together coordinate Zn(2+).

This sequence belongs to the class-I aminoacyl-tRNA synthetase family. IleS type 1 subfamily. In terms of assembly, monomer. Requires Zn(2+) as cofactor.

Its subcellular location is the cytoplasm. It catalyses the reaction tRNA(Ile) + L-isoleucine + ATP = L-isoleucyl-tRNA(Ile) + AMP + diphosphate. Catalyzes the attachment of isoleucine to tRNA(Ile). As IleRS can inadvertently accommodate and process structurally similar amino acids such as valine, to avoid such errors it has two additional distinct tRNA(Ile)-dependent editing activities. One activity is designated as 'pretransfer' editing and involves the hydrolysis of activated Val-AMP. The other activity is designated 'posttransfer' editing and involves deacylation of mischarged Val-tRNA(Ile). This is Isoleucine--tRNA ligase from Shigella boydii serotype 4 (strain Sb227).